Consider the following 617-residue polypeptide: Autophagy-related protein 20 (617 aa).

Residues 1-83 are disordered; it reads MWNDEDNNPY…KRKPGGYDSR (83 aa). Low complexity predominate over residues 20–31; that stretch reads QSSSINPTSPST. The segment covering 48–58 has biased composition (basic and acidic residues); sequence DNEHNHGVIHD. The segment covering 59–68 has biased composition (acidic residues); that stretch reads DSDDDDEDLT. The PX domain occupies 89–209; the sequence is YENPKLSILI…RFFDPNASWS (121 aa). Arginine 126, serine 128, lysine 152, and arginine 175 together coordinate a 1,2-diacyl-sn-glycero-3-phospho-(1D-myo-inositol-3-phosphate). A coiled-coil region spans residues 403-440; that stretch reads QQDLTTEELSKKRALLDQLEQSEAEARRIENYLSSSQQ. A disordered region spans residues 434–516; sequence YLSSSQQISP…SGNSITNKIF (83 aa). Over residues 454–463 the composition is skewed to basic and acidic residues; it reads PPSHQRRDGS. Residues 480–500 show a composition bias toward polar residues; sequence DFSSHTPSASQGLPERSTSVP.

It belongs to the sorting nexin family. In terms of assembly, forms a complex with SNX4/ATG24 and ATG17.

Its subcellular location is the endosome membrane. The protein resides in the preautophagosomal structure membrane. In terms of biological role, required for cytoplasm to vacuole transport (Cvt), pexophagy and mitophagy. Also involved in endoplasmic reticulum-specific autophagic process and is essential for the survival of cells subjected to severe ER stress. Functions in protein retrieval from the endocytic pathway. Required for proper sorting of the v-SNARE protein SNC1. Autophagy is required for proper vegetative growth, asexual/sexual reproduction, and full virulence. Autophagy is particularly involved in the biosynthesis of deoxynivalenol (DON), an important virulence determinant. The sequence is that of Autophagy-related protein 20 from Gibberella zeae (strain ATCC MYA-4620 / CBS 123657 / FGSC 9075 / NRRL 31084 / PH-1) (Wheat head blight fungus).